A 487-amino-acid polypeptide reads, in one-letter code: Protein Optix (487 aa).

Positions 154–214 (WDGEQKTHCF…KNRRQRDRAA (61 aa)) form a DNA-binding region, homeobox. Disordered stretches follow at residues 182 to 330 (NPTK…GAGP) and 443 to 463 (ASVGGGGGNQHHEPTTTGYHH). The span at 255–277 (GTHSPVPSSLQLQHSPGSTSNGA) shows a compositional bias: polar residues. A compositionally biased stretch (basic and acidic residues) spans 278–293 (NDREESLSVDDDKPRD). The span at 294 to 312 (LSGSLPLPLSLPLPLASPT) shows a compositional bias: low complexity. A compositionally biased stretch (gly residues) spans 321–330 (GYGGGAGAGP).

The protein belongs to the SIX/Sine oculis homeobox family. As to expression, expressed during early development of the head. First expressed in a band around the anterior end of stage 5 blastoderm embryo, at 93% to 85% egg length. By gastrula stage, site of expression shifts to the dorsal-anterior region. At stage 12, expression is found in the clypeolabrum, the stomodaeum, and in ectoderm dorsal to the future supraesophageal ganglion.

The protein localises to the nucleus. Its function is as follows. May be involved in head or eye development; development of the clypeolabrum and several head sensory organs. The polypeptide is Protein Optix (Optix) (Drosophila melanogaster (Fruit fly)).